The primary structure comprises 595 residues: Protein LUTEIN DEFICIENT 5, chloroplastic (595 aa).

The transit peptide at 1 to 28 (MAMAFPLSYTPTITVKPVTYSRRSNFVV) directs the protein to the chloroplast. Cysteine 516 is a binding site for heme.

It belongs to the cytochrome P450 family. The cofactor is heme.

It is found in the plastid. Its subcellular location is the chloroplast. Its function is as follows. Heme-containing cytochrome P450 involved in the biosynthesis of xanthophylls. Specific for beta-ring hydroxylation of alpha- and beta-carotene. Also has a low activity toward the epsilon-rings of alpha-carotene. The beta-ring of alpha-carotene is the preferred substrate in planta. This is Protein LUTEIN DEFICIENT 5, chloroplastic (CYP97A3) from Arabidopsis thaliana (Mouse-ear cress).